We begin with the raw amino-acid sequence, 145 residues long: MATPATESVQCFGRKKTAVAVTHCKRGRGLIKVNGSPIELVKPEILRYKAFEPILLLGRHRFVGVDMRIRVRGGGKTSQIYAIRQSIAKALVAYYQKYVDEQAKKEVKDILMRYDRTLLVADPRRCEPKKFGGRGARSRFQKSYR.

It belongs to the universal ribosomal protein uS9 family.

It localises to the cytoplasm. The polypeptide is Small ribosomal subunit protein uS9 (RPS16) (Fritillaria agrestis (Stinkbells)).